The primary structure comprises 293 residues: Small ribosomal subunit protein uS3 (293 aa).

Residues 39–110 enclose the KH type-2 domain; sequence IRREIMKFLK…KISIKIKEVK (72 aa).

The protein belongs to the universal ribosomal protein uS3 family. As to quaternary structure, part of the 30S ribosomal subunit. Forms a tight complex with proteins S10 and S14.

Functionally, binds the lower part of the 30S subunit head. Binds mRNA in the 70S ribosome, positioning it for translation. The sequence is that of Small ribosomal subunit protein uS3 from Borreliella burgdorferi (strain ATCC 35210 / DSM 4680 / CIP 102532 / B31) (Borrelia burgdorferi).